The chain runs to 221 residues: Eukaryotic translation initiation factor 3 subunit K (221 aa).

A PCI domain is found at 46 to 207 (YDLEANLACL…NIKTKHITEK (162 aa)).

It belongs to the eIF-3 subunit K family. As to quaternary structure, component of the eukaryotic translation initiation factor 3 (eIF-3) complex.

Its subcellular location is the cytoplasm. Its function is as follows. Component of the eukaryotic translation initiation factor 3 (eIF-3) complex, which is involved in protein synthesis of a specialized repertoire of mRNAs and, together with other initiation factors, stimulates binding of mRNA and methionyl-tRNAi to the 40S ribosome. The eIF-3 complex specifically targets and initiates translation of a subset of mRNAs involved in cell proliferation. The chain is Eukaryotic translation initiation factor 3 subunit K from Aedes aegypti (Yellowfever mosquito).